We begin with the raw amino-acid sequence, 318 residues long: Deoxyribose-phosphate aldolase (318 aa).

Aspartate 155 (proton donor/acceptor) is an active-site residue. Lysine 218 functions as the Schiff-base intermediate with acetaldehyde in the catalytic mechanism. The active-site Proton donor/acceptor is the lysine 254.

It belongs to the DeoC/FbaB aldolase family. DeoC type 2 subfamily. Interacts with YBX1.

Its subcellular location is the cytoplasm. The protein resides in the cytoplasmic granule. The protein localises to the nucleus. It carries out the reaction 2-deoxy-D-ribose 5-phosphate = D-glyceraldehyde 3-phosphate + acetaldehyde. It participates in carbohydrate degradation; 2-deoxy-D-ribose 1-phosphate degradation; D-glyceraldehyde 3-phosphate and acetaldehyde from 2-deoxy-alpha-D-ribose 1-phosphate: step 2/2. Functionally, catalyzes a reversible aldol reaction between acetaldehyde and D-glyceraldehyde 3-phosphate to generate 2-deoxy-D-ribose 5-phosphate. Participates in stress granule (SG) assembly. May allow ATP production from extracellular deoxyinosine in conditions of energy deprivation. The chain is Deoxyribose-phosphate aldolase (DERA) from Bos taurus (Bovine).